The chain runs to 417 residues: Serine hydroxymethyltransferase (417 aa).

Residues Leu121 and 125–127 (GHL) each bind (6S)-5,6,7,8-tetrahydrofolate. Residue Lys229 is modified to N6-(pyridoxal phosphate)lysine. A (6S)-5,6,7,8-tetrahydrofolate-binding site is contributed by 355 to 357 (SPF).

It belongs to the SHMT family. In terms of assembly, homodimer. Pyridoxal 5'-phosphate is required as a cofactor.

The protein resides in the cytoplasm. It carries out the reaction (6R)-5,10-methylene-5,6,7,8-tetrahydrofolate + glycine + H2O = (6S)-5,6,7,8-tetrahydrofolate + L-serine. It functions in the pathway one-carbon metabolism; tetrahydrofolate interconversion. Its pathway is amino-acid biosynthesis; glycine biosynthesis; glycine from L-serine: step 1/1. Its function is as follows. Catalyzes the reversible interconversion of serine and glycine with tetrahydrofolate (THF) serving as the one-carbon carrier. This reaction serves as the major source of one-carbon groups required for the biosynthesis of purines, thymidylate, methionine, and other important biomolecules. Also exhibits THF-independent aldolase activity toward beta-hydroxyamino acids, producing glycine and aldehydes, via a retro-aldol mechanism. The polypeptide is Serine hydroxymethyltransferase (Serratia proteamaculans (strain 568)).